Consider the following 584-residue polypeptide: Breast carcinoma-amplified sequence 1 (584 aa).

Disordered regions lie at residues 1–29 (MGNQ…NASA), 59–280 (VATS…AAAI), and 297–377 (PNKA…GKLF). 2 stretches are compositionally biased toward polar residues: residues 59–69 (VATSSPETTEI) and 112–128 (ADSS…SNKA). Serine 124 and serine 192 each carry phosphoserine. 3 stretches are compositionally biased toward basic and acidic residues: residues 186–226 (SKPK…KVDE), 238–252 (PAGK…KEGQ), and 300–311 (AETKKDPEDTGA). The residue at position 314 (serine 314) is a Phosphoserine. A compositionally biased stretch (polar residues) spans 314–354 (SPTTSADLKSDKANFTSQETQGAGKNSKGCNPSGHTQSVTT). Positions 357-366 (PAKEGTKEKS) are enriched in basic and acidic residues. A phosphoserine mark is found at serine 381 and serine 399. The disordered stretch occupies residues 415-584 (TVDLNEGDAA…VSIGPVGKSK (170 aa)). A compositionally biased stretch (basic and acidic residues) spans 428–439 (TEAKLKREESKP). A Phosphothreonine modification is found at threonine 480. The segment covering 494–506 (KGKEGSSKDKKSA) has biased composition (basic and acidic residues). The span at 525–540 (CTEQATVDTNSLQNGD) shows a compositional bias: polar residues. Positions 541-550 (KLQKRPEKRQ) are enriched in basic and acidic residues. The residue at position 552 (serine 552) is a Phosphoserine. Residues 565–584 (MLDAQVQTDPVSIGPVGKSK) are interacts with DYNLL1 and DYNLL2.

Homodimer. Interacts with DYNLL1 and DYNLL2. In terms of tissue distribution, highly expressed in the brain and, more specifically, in oligodendrocytes (at protein level). Expressed in the prostate, and at lower levels in testis, intestine and colon. Overexpressed in most breast cancer cell lines and down-regulated in some colorectal tumors.

The protein localises to the cytoplasm. Required for myelination. This chain is Breast carcinoma-amplified sequence 1 (BCAS1), found in Homo sapiens (Human).